Consider the following 83-residue polypeptide: Snake venom metalloproteinase BnP1 (83 aa).

The Peptidase M12B domain maps to 8–83 (SYIELAVVAD…NPQCIINQPI (76 aa)). The Ca(2+) site is built by Glu11, Cys77, and Asn80.

The protein belongs to the venom metalloproteinase (M12B) family. P-I subfamily. As to quaternary structure, monomer. The cofactor is Zn(2+). Expressed by the venom gland.

It is found in the secreted. With respect to regulation, inhibited by EDTA. This protein is a zinc protease from snake venom that is devoid of significant myotoxic and hemorrhagic activities. It hydrolyzes the Aalpha-chain and more slowly the Bbeta-chain of fibrin and fibrinogen, without affecting the gamma-chains. It induces cell detachment and a apoptosis (anoikis) in endothelial cells. The sequence is that of Snake venom metalloproteinase BnP1 from Bothrops pauloensis (Neuwied's lancehead).